A 359-amino-acid chain; its full sequence is NAC domain-containing protein 45 (359 aa).

Positions 19–185 (LPPGFRFHPT…EWVVCKVFHK (167 aa)) constitute an NAC domain. The DNA-binding element occupies 130-191 (VGMKKTLVFY…VFHKKGDDRE (62 aa)).

As to expression, expressed in roots. Expressed at low levels in leaves, stems and panicles.

The protein localises to the nucleus. Functionally, transcription activator involved in responses to drought stress and salt stress. Transactivates the stress response genes LEA19 and PM19L. The polypeptide is NAC domain-containing protein 45 (Oryza sativa subsp. japonica (Rice)).